The chain runs to 2885 residues: E3 ubiquitin-protein ligase hyd (2885 aa).

Residues 83-138 are disordered; it reads SDAKCSTSGGSGTASASKAPSSSRPMARSRARLLRATGRSNSTGQGSGSRSTGVII. 2 stretches are compositionally biased toward low complexity: residues 95 to 108 and 116 to 138; these read TASASKAPSSSRPM and LRATGRSNSTGQGSGSRSTGVII. The UBA domain maps to 154 to 196; it reads YVPEELISQAEVVLQGKSRNLIIRELQRTNLDVNLAVNNLLSR. A compositionally biased stretch (low complexity) spans 266–276; the sequence is ANANAADSNQS. Disordered stretches follow at residues 266-291, 580-664, and 711-731; these read ANANAADSNQSTTRSTSSGTALTGNS, NNLN…GRKD, and AATSSTSNTASTSKEEGKEDD. Polar residues-rich tracts occupy residues 277–291 and 598–615; these read TTRSTSSGTALTGNS and AMPSTGSSKNGQSFSNSK. Ser-628 and Ser-631 each carry phosphoserine. A compositionally biased stretch (basic and acidic residues) spans 650-664; that stretch reads TTKEDSNAPQEGRKD. The segment covering 711-722 has biased composition (low complexity); it reads AATSSTSNTAST. Residue Ser-967 is modified to Phosphoserine. Low complexity predominate over residues 1008 to 1032; sequence ASSSNENSSFATMSSSAAGSASSTS. The tract at residues 1008 to 1035 is disordered; it reads ASSSNENSSFATMSSSAAGSASSTSRDN. A UBR-type zinc finger spans residues 1217 to 1285; that stretch reads DTCSFTWTGA…EKCKCKALIA (69 aa). Position 1362 is a phosphoserine (Ser-1362). The interval 1642 to 1761 is disordered; it reads NEDGMQDDES…IRSRDTARSS (120 aa). Residues 1669-1681 show a composition bias toward polar residues; that stretch reads NQSNQEVQRSVQA. Residues 1696–1721 show a composition bias toward acidic residues; the sequence is LEDESGDSSAQEEDGSEDGESDDQSD. The span at 1735-1749 shows a compositional bias: polar residues; sequence TNSNARSDLAPQTMQ. The residue at position 2037 (Ser-2037) is a Phosphoserine. The interval 2124 to 2143 is disordered; the sequence is IDSSKTGDGNVTNKAEGSTD. Ser-2183 is subject to Phosphoserine. The segment at 2473 to 2492 is disordered; sequence NLDARPYTPPNSSDNATPES. Over residues 2482-2492 the composition is skewed to polar residues; sequence PNSSDNATPES. One can recognise a PABC domain in the interval 2484 to 2561; it reads SSDNATPESL…AIEIITFKQK (78 aa). Ser-2574 bears the Phosphoserine mark. Positions 2782-2885 constitute an HECT domain; sequence FNDESSEGPD…AIKSKNFGFV (104 aa). Residue Cys-2854 is the Glycyl thioester intermediate of the active site.

This sequence belongs to the UBR5 family.

The protein localises to the nucleus. It is found in the cytoplasm. The enzyme catalyses S-ubiquitinyl-[E2 ubiquitin-conjugating enzyme]-L-cysteine + [acceptor protein]-L-lysine = [E2 ubiquitin-conjugating enzyme]-L-cysteine + N(6)-ubiquitinyl-[acceptor protein]-L-lysine.. It functions in the pathway protein modification; protein ubiquitination. Functionally, E3 ubiquitin-protein ligase which accepts ubiquitin from an E2 ubiquitin-conjugating enzyme in the form of a thioester and then directly transfers the ubiquitin to targeted substrate. Required for regulation of cell proliferation in imaginal disks and germ cells. Acts as a negative regulator of hh, ci and dpp expression in the anterior of the eye disk. Acts as a positive regulator of the canonical Wnt signaling pathway by mediating ubiquitination and degradation of gro. Catalyzes 'Lys-63'-linked polyubiquitination of akirin, thereby activating the immune deficiency pathway (Imd). The protein is E3 ubiquitin-protein ligase hyd (hyd) of Drosophila melanogaster (Fruit fly).